Consider the following 352-residue polypeptide: Bifunctional protein FolD 1, mitochondrial (352 aa).

The N-terminal 23 residues, methionine 1–aspartate 23, are a transit peptide targeting the mitochondrion.

Belongs to the tetrahydrofolate dehydrogenase/cyclohydrolase family. Homodimer.

Its subcellular location is the mitochondrion. It catalyses the reaction (6R)-5,10-methylene-5,6,7,8-tetrahydrofolate + NADP(+) = (6R)-5,10-methenyltetrahydrofolate + NADPH. The catalysed reaction is (6R)-5,10-methenyltetrahydrofolate + H2O = (6R)-10-formyltetrahydrofolate + H(+). The protein operates within one-carbon metabolism; tetrahydrofolate interconversion. In terms of biological role, catalyzes the oxidation of 5,10-methylenetetrahydrofolate to 5,10-methenyltetrahydrofolate and then the hydrolysis of 5,10-methenyltetrahydrofolate to 10-formyltetrahydrofolate. This is Bifunctional protein FolD 1, mitochondrial (FOLD1) from Arabidopsis thaliana (Mouse-ear cress).